A 315-amino-acid polypeptide reads, in one-letter code: MAAGVPCALVTSCSSVFSGDQLVQHILGTEDLIVEVTSNDAVRFYPWTIDNKYYSADINLCVVPNKFLVTAEIAESVQAFVVYFDSTQKSGLDSVSSWLPLAKAWLPEVMILVCDRVSEDGINRQKAQEWCIKHGFELVELSPEELPEEDDDFPESTGVKRIVQALNANVWSNVVMKNDRNQGFSLLNSLTGTNHSIGSADPCHPEQPHLPAADSTESLSDHRGGASNTTDAQVDSIVDPMLDLDIQELASLTTGGGDVENFERLFSKLKEMKDKAATLPHEQRKVHAEKVAKAFWMAIGGDRDEIEGLSSDEEH.

Positions 197–234 (IGSADPCHPEQPHLPAADSTESLSDHRGGASNTTDAQV) are disordered. Phosphoserine is present on residues S310 and S311.

Associated with AP-1 and AP-2 complexes. As to expression, widely expressed, including in skin and keratinocytes, with highest levels in adrenal gland, rectum and thymus.

The protein resides in the cytoplasm. It is found in the cytosol. May be involved in endocytic recycling of growth factor receptors such as EGFR. This is Alpha- and gamma-adaptin-binding protein p34 (AAGAB) from Homo sapiens (Human).